A 601-amino-acid polypeptide reads, in one-letter code: Elongation factor 4 (601 aa).

In terms of domain architecture, tr-type G spans 5–187; the sequence is SNIRNFSIIA…AIVERLPAPE (183 aa). Residues 17-22 and 134-137 each bind GTP; these read DHGKST and NKID.

The protein belongs to the TRAFAC class translation factor GTPase superfamily. Classic translation factor GTPase family. LepA subfamily.

The protein localises to the cell inner membrane. It catalyses the reaction GTP + H2O = GDP + phosphate + H(+). In terms of biological role, required for accurate and efficient protein synthesis under certain stress conditions. May act as a fidelity factor of the translation reaction, by catalyzing a one-codon backward translocation of tRNAs on improperly translocated ribosomes. Back-translocation proceeds from a post-translocation (POST) complex to a pre-translocation (PRE) complex, thus giving elongation factor G a second chance to translocate the tRNAs correctly. Binds to ribosomes in a GTP-dependent manner. This is Elongation factor 4 from Oleidesulfovibrio alaskensis (strain ATCC BAA-1058 / DSM 17464 / G20) (Desulfovibrio alaskensis).